Consider the following 359-residue polypeptide: GTP cyclohydrolase FolE2 (359 aa).

It belongs to the GTP cyclohydrolase IV family.

The enzyme catalyses GTP + H2O = 7,8-dihydroneopterin 3'-triphosphate + formate + H(+). It functions in the pathway cofactor biosynthesis; 7,8-dihydroneopterin triphosphate biosynthesis; 7,8-dihydroneopterin triphosphate from GTP: step 1/1. Its function is as follows. Converts GTP to 7,8-dihydroneopterin triphosphate. The protein is GTP cyclohydrolase FolE2 of Cereibacter sphaeroides (strain KD131 / KCTC 12085) (Rhodobacter sphaeroides).